Reading from the N-terminus, the 165-residue chain is Phosphopantetheine adenylyltransferase (165 aa).

Residue serine 10 coordinates substrate. ATP is bound by residues serine 10–phenylalanine 11 and histidine 18. Substrate-binding residues include lysine 42, threonine 79, and arginine 93. ATP contacts are provided by residues glycine 94–arginine 96, glutamate 104, and valine 129–threonine 135.

This sequence belongs to the bacterial CoaD family. As to quaternary structure, homohexamer. Mg(2+) serves as cofactor.

The protein resides in the cytoplasm. The catalysed reaction is (R)-4'-phosphopantetheine + ATP + H(+) = 3'-dephospho-CoA + diphosphate. It participates in cofactor biosynthesis; coenzyme A biosynthesis; CoA from (R)-pantothenate: step 4/5. In terms of biological role, reversibly transfers an adenylyl group from ATP to 4'-phosphopantetheine, yielding dephospho-CoA (dPCoA) and pyrophosphate. The sequence is that of Phosphopantetheine adenylyltransferase from Nitrobacter hamburgensis (strain DSM 10229 / NCIMB 13809 / X14).